Here is a 263-residue protein sequence, read N- to C-terminus: Ribonuclease 3 (263 aa).

A disordered region spans residues 1–23 (MPHSKNQRKHRHHSHSERRRQPK). Residues 35 to 164 (FDELLRTLNL…FVGALYLDQG (130 aa)) enclose the RNase III domain. Glutamate 77 is a binding site for Mg(2+). Aspartate 81 is an active-site residue. Mg(2+) is bound by residues aspartate 150 and glutamate 153. Glutamate 153 is a catalytic residue. One can recognise a DRBM domain in the interval 190–259 (DFKSQLQEFI…AQQALITLSQ (70 aa)).

This sequence belongs to the ribonuclease III family. In terms of assembly, homodimer. The cofactor is Mg(2+).

Its subcellular location is the cytoplasm. It carries out the reaction Endonucleolytic cleavage to 5'-phosphomonoester.. Functionally, digests double-stranded RNA. Involved in the processing of primary rRNA transcript to yield the immediate precursors to the large and small rRNAs (23S and 16S). Processes some mRNAs, and tRNAs when they are encoded in the rRNA operon. Processes pre-crRNA and tracrRNA of type II CRISPR loci if present in the organism. This Halalkalibacterium halodurans (strain ATCC BAA-125 / DSM 18197 / FERM 7344 / JCM 9153 / C-125) (Bacillus halodurans) protein is Ribonuclease 3.